Here is a 342-residue protein sequence, read N- to C-terminus: Ribosomal RNA small subunit methyltransferase C (342 aa).

The protein belongs to the methyltransferase superfamily. RsmC family. In terms of assembly, monomer.

The protein localises to the cytoplasm. The enzyme catalyses guanosine(1207) in 16S rRNA + S-adenosyl-L-methionine = N(2)-methylguanosine(1207) in 16S rRNA + S-adenosyl-L-homocysteine + H(+). Functionally, specifically methylates the guanine in position 1207 of 16S rRNA in the 30S particle. This chain is Ribosomal RNA small subunit methyltransferase C, found in Shewanella loihica (strain ATCC BAA-1088 / PV-4).